We begin with the raw amino-acid sequence, 75 residues long: UPF0154 protein MMOB4450 (75 aa).

Residues 7 to 27 form a helical membrane-spanning segment; the sequence is IGLIVGLSILFTIVGLVVGFF.

Belongs to the UPF0154 family.

It is found in the cell membrane. The sequence is that of UPF0154 protein MMOB4450 from Mycoplasma mobile (strain ATCC 43663 / 163K / NCTC 11711) (Mesomycoplasma mobile).